We begin with the raw amino-acid sequence, 1011 residues long: CRM-domain containing factor CFM2, chloroplastic (1011 aa).

Residues 1-45 constitute a chloroplast transit peptide; that stretch reads MLLPLFHQQPLILAKTFPDRIFPPFLVPNTLVSRRNVSRANSGIF. Positions 77–90 are enriched in basic and acidic residues; sequence HDSPTRRITGEESG. A disordered region spans residues 77–96; it reads HDSPTRRITGEESGKNSPGE. 3 CRM domains span residues 164 to 260, 376 to 473, and 577 to 677; these read LTLP…YFVS, PKLT…AVSS, and EGIT…QCLR. 2 disordered regions span residues 721-810 and 841-872; these read DSAT…GNSL and LNANRKLPGSSTGSGSQISALRERKSENDGLV. The segment covering 722–736 has biased composition (polar residues); that stretch reads SATNETWSDGESSNM. Positions 743–757 are enriched in basic and acidic residues; that stretch reads ENQHTEPEKAREKIE. Over residues 762 to 771 the composition is skewed to polar residues; that stretch reads SDLSVPSSGE. A compositionally biased stretch (acidic residues) spans 772-782; the sequence is ENWEDDSEGEV. The segment covering 849-859 has biased composition (polar residues); it reads GSSTGSGSQIS. The CRM 4 domain maps to 873–972; the sequence is TDLSNRERLI…WGAEEEMKSF (100 aa).

Interacts with RNA. Part of large ribonucleo-protein particles that contain CAF1 and/or CAF2.

The protein localises to the plastid. It localises to the chloroplast stroma. Binds specific group II introns in chloroplasts and facilitates their splicing. Acts on both subgroup IIA and subgroup IIB introns. The substrates of the subgroup IIB also require the CRM domain proteins CAF1 or CAF2, with a simultaneous binding of CFM2 and CAF1 or CAF2. Can bind to and promote the splicing of the single group I intron in chloroplast tRNA transcript of trnL-UAA gene. This chain is CRM-domain containing factor CFM2, chloroplastic, found in Arabidopsis thaliana (Mouse-ear cress).